A 1094-amino-acid chain; its full sequence is Carbamoyl phosphate synthase large chain (1094 aa).

Residues 1–402 are carboxyphosphate synthetic domain; it reads MPRRSDLHRI…AFQKALRALE (402 aa). Residues R129, R169, G175, G176, R208, L210, E215, G241, V242, H243, Q285, and E299 each contribute to the ATP site. The 196-residue stretch at 133 to 328 folds into the ATP-grasp 1 domain; it reads GEAMEKIGLR…IARIGAKLAV (196 aa). Positions 285, 299, and 301 each coordinate Mg(2+). Mn(2+) contacts are provided by Q285, E299, and N301. Residues 403–552 form an oligomerization domain region; that stretch reads TGRSGWTIAE…YLYGNYDEES (150 aa). The carbamoyl phosphate synthetic domain stretch occupies residues 553 to 936; sequence EAATEGRKKV…AFMKSQLAAD (384 aa). One can recognise an ATP-grasp 2 domain in the interval 679–870; sequence EAIARELGIE…LPSVAARLML (192 aa). ATP contacts are provided by R715, R754, L756, E761, G786, I787, H788, S789, Q829, and E841. Residues Q829, E841, and N843 each contribute to the Mg(2+) site. Mn(2+) contacts are provided by Q829, E841, and N843. The region spanning 937–1077 is the MGS-like domain; that stretch reads NALPREGTVF…QEWHEILRAP (141 aa). Residues 937–1094 form an allosteric domain region; that stretch reads NALPREGTVF…AGSTQPAGVA (158 aa).

This sequence belongs to the CarB family. Composed of two chains; the small (or glutamine) chain promotes the hydrolysis of glutamine to ammonia, which is used by the large (or ammonia) chain to synthesize carbamoyl phosphate. Tetramer of heterodimers (alpha,beta)4. It depends on Mg(2+) as a cofactor. Mn(2+) is required as a cofactor.

The enzyme catalyses hydrogencarbonate + L-glutamine + 2 ATP + H2O = carbamoyl phosphate + L-glutamate + 2 ADP + phosphate + 2 H(+). It catalyses the reaction hydrogencarbonate + NH4(+) + 2 ATP = carbamoyl phosphate + 2 ADP + phosphate + 2 H(+). It functions in the pathway amino-acid biosynthesis; L-arginine biosynthesis; carbamoyl phosphate from bicarbonate: step 1/1. Its pathway is pyrimidine metabolism; UMP biosynthesis via de novo pathway; (S)-dihydroorotate from bicarbonate: step 1/3. In terms of biological role, large subunit of the glutamine-dependent carbamoyl phosphate synthetase (CPSase). CPSase catalyzes the formation of carbamoyl phosphate from the ammonia moiety of glutamine, carbonate, and phosphate donated by ATP, constituting the first step of 2 biosynthetic pathways, one leading to arginine and/or urea and the other to pyrimidine nucleotides. The large subunit (synthetase) binds the substrates ammonia (free or transferred from glutamine from the small subunit), hydrogencarbonate and ATP and carries out an ATP-coupled ligase reaction, activating hydrogencarbonate by forming carboxy phosphate which reacts with ammonia to form carbamoyl phosphate. The chain is Carbamoyl phosphate synthase large chain from Gemmatimonas aurantiaca (strain DSM 14586 / JCM 11422 / NBRC 100505 / T-27).